Here is a 436-residue protein sequence, read N- to C-terminus: MSQALPLVTRQGDRIAIVSGLRTPFARQATAFHGIPAVELGKMVVGELLARSEIPAEVIEQLVFGQVVQMPEAPNIAREIVLGTGMNVHTDAYSVSRACATSFQAVANVAESLMAGTIRAGIAGGADSSSVLPIGVSKKLARILVDVNKARTTGQKLKLFSRLRLRDLMPVPPAVAEYSTGLRMGDTAEQMAKTYGITREQQDALAHRSHQRAAQAWAEGKLADEVMTTYAPPYKEPFSEDNNIRGNSTLADYAKLRPAFDRQHGTVTAANSTPLTDGAAAVILMTESRAKELGLAPLGYLRSYAFTAIDVWQDMLLGPAWSTPLALERAGLTLADLSLIDMHEAFAAQTLANIQLLGSERFARDVLGRAHATGEVDDSKFNVLGGSIAYGHPFAATGARMITQTLHELRRRGGGFGLVTACAAGGLGAAMVLEAE.

The Acyl-thioester intermediate role is filled by Cys-99. Active-site proton acceptor residues include His-392 and Cys-422.

This sequence belongs to the thiolase-like superfamily. Thiolase family. Heterotetramer of two alpha chains (FadJ) and two beta chains (FadI).

It localises to the cytoplasm. It catalyses the reaction an acyl-CoA + acetyl-CoA = a 3-oxoacyl-CoA + CoA. It functions in the pathway lipid metabolism; fatty acid beta-oxidation. Its function is as follows. Catalyzes the final step of fatty acid oxidation in which acetyl-CoA is released and the CoA ester of a fatty acid two carbons shorter is formed. The protein is 3-ketoacyl-CoA thiolase of Citrobacter koseri (strain ATCC BAA-895 / CDC 4225-83 / SGSC4696).